Reading from the N-terminus, the 1177-residue chain is MLQLLVLKIEDPGCFWVIIKGCSPFLDHDVDYQKLNSAMNDFYNSTCQDIEIKPLTLEEGQVCVVYCEELKCWCRAIVKSITSSADQYLAECFLVDFAKNIPVKSKNIRVVVESFMQLPYRAKKFSLYCTKPVTLHIDFCRDSTDIVPAKKWDNAAIQYFQNLLKATTQVEARLCAVEEDTFEVYLYVTIKDEKVCVNDDLVAKNYACYMSPTKNKNLDYLEKPRLNIKSAPSFNKLNPALTLWPMFLQGKDVQGMEDSHGVNFPAQSLQHTWCKGIVGDLRPTATAQDKAVKCNMDSLRDSPKDKSEKKHHCISLKDTNKRVESSVYWPAKRGITIYADPDVPEASALSQKSNEKPLRLTEKKEYDEKNSCVKLLQFLNPDPLRADGISDLQQLQKLKGLQPPVVVLRNKIKPCLTIDSSPLSADLKKALQRNKFPGPSHTESYSWPPIARGCDVVVISHCESNPLLYLLPVLTVLQTGACYKSLPSRNGPLAVIVCPGWKKAQFIFELLGEYSMSSRPLHPVLLTIGLHKEEAKNTKLPRGCDVIVTTPYSLLRLLACQSLLFLRLCHLILDEVEVLFLEANEQMFAILDNFKKNIEVEERESAPHQIVAVGVHWNKHIEHLIKEFMNDPYIVITAMEEAALYGNVQQVVHLCLECEKTSSLLQALDFIPSQAQKTLIFTCSVAETEIVCKVVESSSIFCLKMHKEMIFNLQNVLEQWKKKLSSGSQIILALTDDCVPLLAITDATCVIHFSFPASPKVFGGRLYCMSDHFHAEQGSPAEQGDKKAKSVLLLTEKDASHAVGVLRYLERADAKVPAELYEFTAGVLEAKEDKKAGRPLCPYLKAFGFCKDKRICPDRHRINPETDLPRKLSSQALPSFGYIKIIPFYILNATNYFGRIVDKHMDLYATLNAEMNEYFKDSNKTTVEKVEKFGLYGLAEKTLFHRVQVLEVNQKEDAWALDDILVEFIDEGRTGLVTRDQLLHLPEHFHTLPPQAVEFIVCRVKPADNEIEWNPKVTRYIHHKIVGKLHDAKVILALGNTVWIDPMVHITNLSSLKTSVIDYNVRAEILSMGMGIDNPEHIEQLKKLREDAKIPACEESLSQTPPRVTGTSPAQDQDHPSEEQGGQGTPPAEDAACLQSPQPEDTGAEGGAESKTSSENQKPGGYLVFKRWLSSNR.

The 63-residue stretch at 56–118 (TLEEGQVCVV…RVVVESFMQL (63 aa)) folds into the Tudor 1 domain. In terms of domain architecture, Helicase ATP-binding spans 447–635 (WPPIARGCDV…KEFMNDPYIV (189 aa)). 460–467 (SHCESNPL) contacts ATP. Positions 574–577 (DEVE) match the DEAH box motif. A Tudor 2 domain is found at 900–999 (IVDKHMDLYA…HTLPPQAVEF (100 aa)). Residues 1098–1177 (EESLSQTPPR…VFKRWLSSNR (80 aa)) are disordered. Residues 1100–1115 (SLSQTPPRVTGTSPAQ) show a composition bias toward polar residues.

In terms of assembly, component of a mRNP complex containing PIWIL2, TDRD1 and piRNAs. Component of the PET complex, at least composed of EXD1, PIWIL2, TDRD12 and piRNAs.

It carries out the reaction ATP + H2O = ADP + phosphate + H(+). Its function is as follows. Probable ATP-binding RNA helicase required during spermatogenesis to repress transposable elements and preventing their mobilization, which is essential for the germline integrity. Acts via the piRNA metabolic process, which mediates the repression of transposable elements during meiosis by forming complexes composed of piRNAs and Piwi proteins and governs the methylation and subsequent repression of transposons. Involved in the secondary piRNAs metabolic process. Acts via the PET complex, a multiprotein complex required during the secondary piRNAs metabolic process for the PIWIL2 slicing-triggered loading of PIWIL4 piRNAs. This Homo sapiens (Human) protein is Putative ATP-dependent RNA helicase TDRD12 (TDRD12).